The chain runs to 565 residues: Arginine--tRNA ligase (565 aa).

The 'HIGH' region signature appears at 126 to 136; sequence ANPTGPLHIGH.

It belongs to the class-I aminoacyl-tRNA synthetase family. In terms of assembly, monomer.

Its subcellular location is the cytoplasm. The enzyme catalyses tRNA(Arg) + L-arginine + ATP = L-arginyl-tRNA(Arg) + AMP + diphosphate. This Wolbachia sp. subsp. Brugia malayi (strain TRS) protein is Arginine--tRNA ligase.